Here is a 413-residue protein sequence, read N- to C-terminus: Serine/threonine-protein kinase ppk27 (413 aa).

The Protein kinase domain occupies 102-403 (WSINTKITST…LKDFNKHGNF (302 aa)). Residues 108-116 (ITSTEQREV) and lysine 133 each bind ATP. Aspartate 231 serves as the catalytic Proton acceptor.

This sequence belongs to the protein kinase superfamily. Ser/Thr protein kinase family.

The protein localises to the cytoplasm. It catalyses the reaction L-seryl-[protein] + ATP = O-phospho-L-seryl-[protein] + ADP + H(+). The enzyme catalyses L-threonyl-[protein] + ATP = O-phospho-L-threonyl-[protein] + ADP + H(+). The sequence is that of Serine/threonine-protein kinase ppk27 (ppk27) from Schizosaccharomyces pombe (strain 972 / ATCC 24843) (Fission yeast).